The sequence spans 674 residues: Zinc finger protein 750 (674 aa).

The CCHC-type zinc-finger motif lies at 25–51; sequence YKCFQCPFTCNEKSHLFNHMKYGLCKN. Residues Cys-27, Cys-30, His-43, and Cys-49 each coordinate Zn(2+). 3 disordered regions span residues 105 to 125, 370 to 466, and 594 to 674; these read EAKENLDLKNEPKSHAEKTTV, LAKN…QSHS, and TSSP…PRVS. Polar residues-rich tracts occupy residues 401–411 and 444–466; these read SPTNFTQSSQG and DSQTIISRENSPSFGNDGVQSHS.

The protein localises to the nucleus. Transcription factor involved in epidermis differentiation. In Xenopus laevis (African clawed frog), this protein is Zinc finger protein 750 (znf750).